Here is a 318-residue protein sequence, read N- to C-terminus: MANTLEQLKLYTTIVADTGDIEAIKRYQPEDATTNPSLILKAAQIPEYESLIDNAIDWAKSQSDDLAQQLDDASDKLAVNIGVEILKLVPGRISTEVDARLSFDKEQSIAKAHKLVRLYKEAGVDKSRILIKLASTWEGICAAKELEKEGINCNLTLLFSFAQARACAEAGAYLISPFVGRILDWYKKDTGKDYDAVNDPGVVSVTEIYNYYKQHGFNTVVMGASFRNIGEIIELAGCDRLTIGPSLLEELANSQVDITPKLVAATSTVAAEAPLTEAQFRWDFNQDPMAVDKLAEGIRNFAIDQGKLEVMLTAKLAN.

Residue K132 is the Schiff-base intermediate with substrate of the active site.

Belongs to the transaldolase family. Type 1 subfamily. As to quaternary structure, homodimer.

It is found in the cytoplasm. The catalysed reaction is D-sedoheptulose 7-phosphate + D-glyceraldehyde 3-phosphate = D-erythrose 4-phosphate + beta-D-fructose 6-phosphate. It functions in the pathway carbohydrate degradation; pentose phosphate pathway; D-glyceraldehyde 3-phosphate and beta-D-fructose 6-phosphate from D-ribose 5-phosphate and D-xylulose 5-phosphate (non-oxidative stage): step 2/3. Transaldolase is important for the balance of metabolites in the pentose-phosphate pathway. This is Transaldolase from Shewanella baltica (strain OS185).